The primary structure comprises 613 residues: Alkyldihydroxyacetonephosphate synthase (613 aa).

An FAD-binding PCMH-type domain is found at I126–L307. Residues P158–N164, D228–T234, A241–S244, and E291–V297 each bind FAD. R437 is a binding site for substrate. The active-site Proton donor/acceptor is Y498. The important for enzyme activity stretch occupies residues H534–H536. The segment at N572 to R593 is disordered. The Microbody targeting signal motif lies at A611–L613.

Belongs to the FAD-binding oxidoreductase/transferase type 4 family. Homodimer. FAD serves as cofactor.

It localises to the peroxisome. It catalyses the reaction a long chain fatty alcohol + a 1-acylglycerone 3-phosphate = a 1-O-alkylglycerone 3-phosphate + a long-chain fatty acid + H(+). Its pathway is glycerolipid metabolism; ether lipid biosynthesis. Its function is as follows. Catalyzes the exchange of an acyl for a long-chain alkyl group and the formation of the ether bond in the biosynthesis of ether phospholipids. This Trypanosoma brucei brucei protein is Alkyldihydroxyacetonephosphate synthase.